The primary structure comprises 347 residues: Ribosomal RNA small subunit methyltransferase H (347 aa).

Residues 47-49, aspartate 64, phenylalanine 91, aspartate 114, and glutamine 121 each bind S-adenosyl-L-methionine; that span reads GGY. A disordered region spans residues 291–347; it reads PAVKGAVGPTAEEEERNPRARSAKLRAGIRTENPPLEDDLSLFGLPKLPETNELARS.

This sequence belongs to the methyltransferase superfamily. RsmH family.

It is found in the cytoplasm. The catalysed reaction is cytidine(1402) in 16S rRNA + S-adenosyl-L-methionine = N(4)-methylcytidine(1402) in 16S rRNA + S-adenosyl-L-homocysteine + H(+). Its function is as follows. Specifically methylates the N4 position of cytidine in position 1402 (C1402) of 16S rRNA. This chain is Ribosomal RNA small subunit methyltransferase H, found in Brucella anthropi (strain ATCC 49188 / DSM 6882 / CCUG 24695 / JCM 21032 / LMG 3331 / NBRC 15819 / NCTC 12168 / Alc 37) (Ochrobactrum anthropi).